The primary structure comprises 332 residues: L-lactate dehydrogenase A chain (332 aa).

The residue at position 2 (Ala-2) is an N-acetylalanine. Lys-5 carries the post-translational modification N6-acetyllysine; alternate. Residue Lys-5 is modified to N6-succinyllysine; alternate. Residue Lys-14 is modified to N6-acetyllysine. Thr-18 bears the Phosphothreonine mark. Residue 29-57 (GAVGMACAISILMKDLADELALVDVIEDK) participates in NAD(+) binding. Lys-57 bears the N6-acetyllysine; alternate mark. A Glycyl lysine isopeptide (Lys-Gly) (interchain with G-Cter in SUMO2); alternate cross-link involves residue Lys-57. Lys-81 carries the post-translational modification N6-acetyllysine. Position 99 (Arg-99) interacts with NAD(+). Arg-106 lines the substrate pocket. Lys-118 bears the N6-acetyllysine; alternate mark. Residue Lys-118 is modified to N6-succinyllysine; alternate. Lys-126 is subject to N6-acetyllysine. 2 residues coordinate substrate: Asn-138 and Arg-169. His-193 serves as the catalytic Proton acceptor. Residues Lys-224 and Lys-232 each carry the N6-acetyllysine modification. Tyr-239 is modified (phosphotyrosine). The residue at position 243 (Lys-243) is an N6-acetyllysine. Thr-248 contacts substrate. At Thr-309 the chain carries Phosphothreonine. Phosphoserine is present on Ser-310. An N6-acetyllysine; alternate modification is found at Lys-318. An N6-succinyllysine; alternate modification is found at Lys-318. Position 322 is a phosphothreonine (Thr-322).

The protein belongs to the LDH/MDH superfamily. LDH family. In terms of assembly, homotetramer. Interacts with PTEN upstream reading frame protein MP31. In terms of processing, ISGylated.

It is found in the cytoplasm. The catalysed reaction is (S)-lactate + NAD(+) = pyruvate + NADH + H(+). It functions in the pathway fermentation; pyruvate fermentation to lactate; (S)-lactate from pyruvate: step 1/1. Interconverts simultaneously and stereospecifically pyruvate and lactate with concomitant interconversion of NADH and NAD(+). The chain is L-lactate dehydrogenase A chain (LDHA) from Pan troglodytes (Chimpanzee).